The chain runs to 62 residues: uncharacterized protein (62 aa).

This is an uncharacterized protein from Archaeoglobus fulgidus (strain ATCC 49558 / DSM 4304 / JCM 9628 / NBRC 100126 / VC-16).